A 304-amino-acid polypeptide reads, in one-letter code: tRNA pseudouridine synthase B (304 aa).

Asp-38 serves as the catalytic Nucleophile.

It belongs to the pseudouridine synthase TruB family. Type 1 subfamily.

It carries out the reaction uridine(55) in tRNA = pseudouridine(55) in tRNA. Its function is as follows. Responsible for synthesis of pseudouridine from uracil-55 in the psi GC loop of transfer RNAs. In Listeria monocytogenes serotype 4b (strain F2365), this protein is tRNA pseudouridine synthase B.